Reading from the N-terminus, the 341-residue chain is Malate dehydrogenase 1, mitochondrial (341 aa).

A mitochondrion-targeting transit peptide spans 1-22; it reads MFRSMLVRSSASAKQAVIRRSF. NAD(+)-binding positions include 36–42 and D62; that span reads GAAGGIG. Substrate is bound by residues R109 and R115. NAD(+)-binding positions include N122 and 145-147; that span reads ISN. Residues N147 and R181 each contribute to the substrate site. The Proton acceptor role is filled by H205. M256 serves as a coordination point for NAD(+).

This sequence belongs to the LDH/MDH superfamily. MDH type 1 family. As to quaternary structure, homodimer. In terms of processing, forms intramolecular disulfide bonds. Expressed in rosette leaves.

It localises to the mitochondrion matrix. The enzyme catalyses (S)-malate + NAD(+) = oxaloacetate + NADH + H(+). Its activity is regulated as follows. Negatively regulated by ATP. Not redox-regulated. The formation of intramolecular disulfide bonds does not alter enzymatic activity. Functionally, catalyzes a reversible NAD-dependent dehydrogenase reaction involved in central metabolism and redox homeostasis between organelle compartments. Required for carbon dioxide and energy partitioning in leaves. May limit photorespiration during the dark phase. Its activity is essential to shuttle reductants out from the mitochondria to support the photorespiratory flux. Can convert 2-oxoglutarate to (S)-2-hydroxyglutarate in vitro. The protein is Malate dehydrogenase 1, mitochondrial of Arabidopsis thaliana (Mouse-ear cress).